The following is a 422-amino-acid chain: Metallocarboxypeptidase A-like protein TRV_02598 (422 aa).

A signal peptide spans Met-1–Gly-16. Residues Gly-17 to Asn-119 constitute a propeptide, activation peptide. Residues Ser-125 to Leu-421 enclose the Peptidase M14 domain. Zn(2+) contacts are provided by His-185 and Glu-188. Residues His-185 to Glu-188, Arg-240, and Asn-256 to Arg-257 contribute to the substrate site. A disulfide bridge connects residues Cys-250 and Cys-273. His-311 contributes to the Zn(2+) binding site. Ser-312–Tyr-313 is a binding site for substrate. Catalysis depends on Glu-387, which acts as the Proton donor/acceptor.

It belongs to the peptidase M14 family. Requires Zn(2+) as cofactor.

It is found in the secreted. Extracellular metalloprotease that contributes to pathogenicity. The polypeptide is Metallocarboxypeptidase A-like protein TRV_02598 (Trichophyton verrucosum (strain HKI 0517)).